Here is a 198-residue protein sequence, read N- to C-terminus: MTIIIIVLSYFLGSIPTGFLFGKFLKNIDLRLIGSGSTGATNVLRNVGKWPAFFVFIIDVGKGLLAVKLSQSYTNQHLFEVLAGISAVSGHIWPIWLKGKGGKAVATGLGMFIALSWKVGFASLGIFLIILSKSKIVSLSSILAAFFLPLFMFLDIGVTNHPYFLISLVVSILVILKHRTNIRRLIKGEESKINSLNK.

The next 5 helical transmembrane spans lie at 1-21 (MTII…GFLF), 77-97 (HLFE…PIWL), 111-131 (MFIA…LIIL), 136-156 (IVSL…FLDI), and 157-177 (GVTN…VILK).

This sequence belongs to the PlsY family. Probably interacts with PlsX.

It is found in the cell inner membrane. The enzyme catalyses an acyl phosphate + sn-glycerol 3-phosphate = a 1-acyl-sn-glycero-3-phosphate + phosphate. It functions in the pathway lipid metabolism; phospholipid metabolism. In terms of biological role, catalyzes the transfer of an acyl group from acyl-phosphate (acyl-PO(4)) to glycerol-3-phosphate (G3P) to form lysophosphatidic acid (LPA). This enzyme utilizes acyl-phosphate as fatty acyl donor, but not acyl-CoA or acyl-ACP. The protein is Glycerol-3-phosphate acyltransferase of Prochlorococcus marinus (strain MIT 9515).